A 260-amino-acid polypeptide reads, in one-letter code: Proteasome subunit alpha (260 aa).

The protein belongs to the peptidase T1A family. In terms of assembly, the 20S proteasome core is composed of 14 alpha and 14 beta subunits that assemble into four stacked heptameric rings, resulting in a barrel-shaped structure. The two inner rings, each composed of seven catalytic beta subunits, are sandwiched by two outer rings, each composed of seven alpha subunits. The catalytic chamber with the active sites is on the inside of the barrel. Has a gated structure, the ends of the cylinder being occluded by the N-termini of the alpha-subunits. Is capped at one or both ends by the proteasome regulatory ATPase, PAN.

It localises to the cytoplasm. The formation of the proteasomal ATPase PAN-20S proteasome complex, via the docking of the C-termini of PAN into the intersubunit pockets in the alpha-rings, triggers opening of the gate for substrate entry. Interconversion between the open-gate and close-gate conformations leads to a dynamic regulation of the 20S proteasome proteolysis activity. Its function is as follows. Component of the proteasome core, a large protease complex with broad specificity involved in protein degradation. The protein is Proteasome subunit alpha of Thermococcus kodakarensis (strain ATCC BAA-918 / JCM 12380 / KOD1) (Pyrococcus kodakaraensis (strain KOD1)).